Reading from the N-terminus, the 315-residue chain is Olfactory receptor 2V2 (315 aa).

Topologically, residues 1–26 are extracellular; it reads METWVNQSYTDGFFLLGIFSHSTADL. The N-linked (GlcNAc...) asparagine glycan is linked to asparagine 6. Residues 27-50 form a helical membrane-spanning segment; sequence VLFSVVMAVFTVALCGNVLLIFLI. At 51-58 the chain is on the cytoplasmic side; it reads YMDPHLHT. Residues 59–80 traverse the membrane as a helical segment; that stretch reads PMYFFLSQLSLMDLMLVCTNVP. At 81–101 the chain is on the extracellular side; the sequence is KMAANFLSGRKSISFVGCGIQ. Residues cysteine 98 and cysteine 190 are joined by a disulfide bond. Residues 102–121 traverse the membrane as a helical segment; it reads IGLFVCLVGSEGLLLGLMAY. At 122–140 the chain is on the cytoplasmic side; it reads DRYVAISHPLHYPILMNQR. A helical transmembrane segment spans residues 141–159; it reads VCLQITGSSWAFGIIDGLI. The Extracellular portion of the chain corresponds to 160 to 196; it reads QMVVVMNFPYCGLRKVNHFFCEMLSLLKLACVDTSLF. The helical transmembrane segment at 197–220 threads the bilayer; the sequence is EKVIFACCVFMLLFPFSIIVASYA. The Cytoplasmic segment spans residues 221 to 237; it reads HILGTVLQMHSAQAWKK. Residues 238–260 traverse the membrane as a helical segment; sequence ALATCSSHLTAVTLFYGAAMFIY. Residues 261–273 are Extracellular-facing; that stretch reads LRPRHYRAPSHDK. Residues 274–293 traverse the membrane as a helical segment; that stretch reads VASIFYTVLTPMLNPLIYSL. Over 294–315 the chain is Cytoplasmic; sequence RNREVMGALRKGLDRCRIGSQH.

It belongs to the G-protein coupled receptor 1 family.

The protein resides in the cell membrane. Its function is as follows. Odorant receptor. The protein is Olfactory receptor 2V2 (OR2V2) of Homo sapiens (Human).